Here is a 379-residue protein sequence, read N- to C-terminus: Probable homogentisate phytyltransferase 2, chloroplastic (379 aa).

The disordered stretch occupies residues 1 to 39 (MASLASPPLPCRAAATASRSGRPAPRLLGPPPPPASPLL). Residues 1 to 65 (MASLASPPLP…WSRRDAVRVC (65 aa)) constitute a chloroplast transit peptide. The next 8 helical transmembrane spans lie at 121–141 (WLVF…GYIV), 174–194 (LVVL…GPFI), 195–215 (TSLY…PFRL), 220–240 (VAAF…GVYY), 252–272 (WSSP…VIAI), 299–319 (IAFL…AVAF), 328–348 (TVMV…TWVL), and 361–378 (YYRF…FFPL).

This sequence belongs to the UbiA prenyltransferase family.

The protein resides in the plastid. It is found in the chloroplast thylakoid membrane. The catalysed reaction is phytyl diphosphate + homogentisate + H(+) = 2-methyl-6-phytyl-1,4-benzene-1,4-diol + CO2 + diphosphate. It functions in the pathway cofactor biosynthesis; tocopherol biosynthesis. Functionally, involved in the synthesis of tocopherol (vitamin E). Catalyzes the condensation of homogentisate and phytyl diphosphate to form dimethylphytylhydrquinone. The protein is Probable homogentisate phytyltransferase 2, chloroplastic (HPT2) of Oryza sativa subsp. japonica (Rice).